The primary structure comprises 307 residues: Ribonuclease Z (307 aa).

The Zn(2+) site is built by histidine 63, histidine 65, aspartate 67, histidine 68, histidine 143, aspartate 213, and histidine 271. Catalysis depends on aspartate 67, which acts as the Proton acceptor.

Belongs to the RNase Z family. As to quaternary structure, homodimer. It depends on Zn(2+) as a cofactor.

The catalysed reaction is Endonucleolytic cleavage of RNA, removing extra 3' nucleotides from tRNA precursor, generating 3' termini of tRNAs. A 3'-hydroxy group is left at the tRNA terminus and a 5'-phosphoryl group is left at the trailer molecule.. In terms of biological role, zinc phosphodiesterase, which displays some tRNA 3'-processing endonuclease activity. Probably involved in tRNA maturation, by removing a 3'-trailer from precursor tRNA. The sequence is that of Ribonuclease Z from Lactococcus lactis subsp. lactis (strain IL1403) (Streptococcus lactis).